Here is a 202-residue protein sequence, read N- to C-terminus: Small ribosomal subunit protein uS4c (202 aa).

Residues 90-158 (MRLDNIIFRL…ITKNIELSQK (69 aa)) enclose the S4 RNA-binding domain.

This sequence belongs to the universal ribosomal protein uS4 family. Part of the 30S ribosomal subunit. Contacts protein S5. The interaction surface between S4 and S5 is involved in control of translational fidelity.

It localises to the plastid. It is found in the chloroplast. One of the primary rRNA binding proteins, it binds directly to 16S rRNA where it nucleates assembly of the body of the 30S subunit. Its function is as follows. With S5 and S12 plays an important role in translational accuracy. The chain is Small ribosomal subunit protein uS4c (rps4) from Marchantia romanica (Liverwort).